We begin with the raw amino-acid sequence, 166 residues long: Ribosome maturation factor RimM (166 aa).

In terms of domain architecture, PRC barrel spans 92–164 (EGVYYDFQLI…KIIIDPIPGL (73 aa)).

This sequence belongs to the RimM family. As to quaternary structure, binds ribosomal protein uS19.

It is found in the cytoplasm. In terms of biological role, an accessory protein needed during the final step in the assembly of 30S ribosomal subunit, possibly for assembly of the head region. Essential for efficient processing of 16S rRNA. May be needed both before and after RbfA during the maturation of 16S rRNA. It has affinity for free ribosomal 30S subunits but not for 70S ribosomes. This is Ribosome maturation factor RimM from Dehalococcoides mccartyi (strain CBDB1).